We begin with the raw amino-acid sequence, 349 residues long: N-acetyltaurine hydrolase (349 aa).

A divalent metal cation contacts are provided by His-26, His-28, Glu-169, His-201, His-230, and Asp-298.

It belongs to the metallo-dependent hydrolases superfamily. Phosphotriesterase family. It depends on a divalent metal cation as a cofactor. As to expression, expressed in the kidney, liver and brainstem.

It is found in the cytoplasm. Its subcellular location is the cytosol. It carries out the reaction N-acetyltaurine + H2O = taurine + acetate. It catalyses the reaction N-propanoyltaurine + H2O = propanoate + taurine. The catalysed reaction is N-acetyl-L-methionine + H2O = L-methionine + acetate. The enzyme catalyses N-acetyl-L-isoleucine + H2O = L-isoleucine + acetate. It carries out the reaction N-acetyl-L-leucine + H2O = L-leucine + acetate. It catalyses the reaction N-acetyl-L-valine + H2O = L-valine + acetate. Functionally, N-acetyltaurine hydrolase that regulates feeding by catalyzing the hydrolysis of N-acetyltaurine into taurine and acetate. N-acetyltaurine has anorexigenic and anti-obesity effects that are dependent on GFRAL receptor and GDF15. PTER also acts on other N-acetyl amino acids (Met, Ile, Leu, Val) and N-propionyltaurine, but at lower rates. This chain is N-acetyltaurine hydrolase, found in Mus musculus (Mouse).